A 355-amino-acid chain; its full sequence is Inner membrane protein YghQ (355 aa).

Topologically, residues 1 to 37 (MAGFNIKHWFADGAFRTIIRNSAWLGSSNVVSALLGL) are periplasmic. The chain crosses the membrane as a helical span at residues 38–58 (LALSCAGKGMTPAMFGVLVIV). The Cytoplasmic portion of the chain corresponds to 59-100 (QSYAKSISDFIKFQTWQLVVQYGTPALTNNNPQQFRNVVSFS). The chain crosses the membrane as a helical span at residues 101-121 (FSLDIVSGAVAIVGGIALLPF). Topologically, residues 122-134 (LSHSLGLDDQSFW) are periplasmic. A helical membrane pass occupies residues 135 to 155 (LAALYCTLIPSMASSTPTGIL). Topologically, residues 156-177 (RAVDRFDLIAVQQATKPFLRAA) are cytoplasmic. The chain crosses the membrane as a helical span at residues 178–198 (GSVVAWYFDFGFAGFVIAWYV). Over 199–261 (SNLVGGTMYW…WSARNSCSTV (63 aa)) the chain is Periplasmic. The chain crosses the membrane as a helical span at residues 262 to 282 (LVGIVLGPAAAGLFKIAMTFF). At 283 to 323 (DAAGTPAGLLGKSFYPEVMRLDPRTTRPWLLGVKSGLLAGG) the chain is on the cytoplasmic side. The chain crosses the membrane as a helical span at residues 324–344 (IGILVALAVLIVGKPLISLVF). Residues 345 to 355 (GVKYLEAYDLI) are Periplasmic-facing.

The protein resides in the cell inner membrane. The chain is Inner membrane protein YghQ (yghQ) from Escherichia coli (strain K12).